Consider the following 396-residue polypeptide: Gap junction gamma-1 protein (396 aa).

The Cytoplasmic portion of the chain corresponds to 1–22 (MSWSFLTRLLEEIHNHSTFVGK). The helical transmembrane segment at 23 to 45 (IWLTVLIVFRIVLTAVGGESIYY) threads the bilayer. At 46-75 (DEQSKFVCNTEQPGCENVCYDAFAPLSHVR) the chain is on the extracellular side. The chain crosses the membrane as a helical span at residues 76–95 (FWVFQIILVATPSVMYLGYA). The Cytoplasmic portion of the chain corresponds to 96 to 175 (IHKIAKMEHG…RRIREDGLMK (80 aa)). The segment at 145-165 (ELESEKENKEQNQSKPKHDGR) is disordered. Residues 147 to 156 (ESEKENKEQN) show a composition bias toward basic and acidic residues. The helical transmembrane segment at 176 to 198 (IYVLQLLARTMFEVGFLIGQYFL) threads the bilayer. Over 199 to 228 (YGFQVHPFYVCSRVPCPHKIDCFISRPTEK) the chain is Extracellular. A helical membrane pass occupies residues 229–248 (TIFLLIMYGVTGLCLLLNIW). Topologically, residues 249-396 (EMLHLGFGTI…SGDGKTSVWI (148 aa)) are cytoplasmic. Residues 357–396 (NHQNNPHGPREKKAKVGSKAGSNKSSASSKSGDGKTSVWI) are disordered. Residues 373–396 (GSKAGSNKSSASSKSGDGKTSVWI) are compositionally biased toward low complexity.

It belongs to the connexin family. Gamma-type subfamily. As to quaternary structure, a connexon is composed of a hexamer of connexins. Interacts with CNST.

Its subcellular location is the cell membrane. The protein resides in the cell junction. The protein localises to the gap junction. In terms of biological role, one gap junction consists of a cluster of closely packed pairs of transmembrane channels, the connexons, through which materials of low MW diffuse from one cell to a neighboring cell. In Sus scrofa (Pig), this protein is Gap junction gamma-1 protein (GJC1).